The following is a 410-amino-acid chain: Gamma-glutamyl phosphate reductase (410 aa).

It belongs to the gamma-glutamyl phosphate reductase family.

Its subcellular location is the cytoplasm. The catalysed reaction is L-glutamate 5-semialdehyde + phosphate + NADP(+) = L-glutamyl 5-phosphate + NADPH + H(+). It participates in amino-acid biosynthesis; L-proline biosynthesis; L-glutamate 5-semialdehyde from L-glutamate: step 2/2. In terms of biological role, catalyzes the NADPH-dependent reduction of L-glutamate 5-phosphate into L-glutamate 5-semialdehyde and phosphate. The product spontaneously undergoes cyclization to form 1-pyrroline-5-carboxylate. In Sulfurovum sp. (strain NBC37-1), this protein is Gamma-glutamyl phosphate reductase.